The following is an 85-amino-acid chain: Splicing factor 3B subunit 5 (85 aa).

Belongs to the SF3B5 family. As to quaternary structure, component of the SF3B complex. SF3B complex associates with the splicing factor SF3A complex and a 12S RNA unit to form the U2 small nuclear ribonucleoproteins complex (U2 snRNP). Identified in the SAGA transcription regulatory histone acetylation (HAT) complex; the interaction is RNA-independent.

The protein localises to the nucleus. In terms of biological role, involved in pre-mRNA splicing as component of spliceosome. As part of the spliceosome complex, plays a role in the regulation of spermatogonial differentiation. When associated with the SAGA transcription regulatory histone acetylation (HAT) complex, might be involved in the transcriptional activation of a subset of SAGA-regulated genes. The chain is Splicing factor 3B subunit 5 from Drosophila melanogaster (Fruit fly).